The following is a 203-amino-acid chain: Small ribosomal subunit protein uS4 (203 aa).

Residues 93–153 enclose the S4 RNA-binding domain; the sequence is QRLDSLVYRL…DKSKNIVPIQ (61 aa).

The protein belongs to the universal ribosomal protein uS4 family. As to quaternary structure, part of the 30S ribosomal subunit. Contacts protein S5. The interaction surface between S4 and S5 is involved in control of translational fidelity.

Functionally, one of the primary rRNA binding proteins, it binds directly to 16S rRNA where it nucleates assembly of the body of the 30S subunit. Its function is as follows. With S5 and S12 plays an important role in translational accuracy. The protein is Small ribosomal subunit protein uS4 of Leuconostoc citreum (strain KM20).